The chain runs to 728 residues: MGLLALGTALDWPDAKQQAHLVRAWGIKQLLEIWNKAKGKERDAMLWGDEIEYLVVNYSKDEPKVLLSLRQADILKALADSKTLKVTGDCAPGTEANADAGNVTLPVFHPEFGRFMLEATPGKPWGIDFKDLLTVEADMKLRRCIAKDHMLSNEHPITLTTFPRIGSPGVFTEPSYPVSGPKLRSQFVPDEIANPHIRFPTLAANIRSRRGRKVQVNVPVFRDENTPWPWKDPTVNYDLHNWPEDDDVRNGAAPDNFIHMDAMAFGMGSCCLQITFQAKNITEGRKMYDQLSPLGPILLALTAATPVYKGFIADTDVRWNQISRAVDDRTPEELGEKPLKNDRWRIPKSRYASNSTYISTDSRLRPEYMDPNLVIDPEIKQQLLDGGMDDRLATHFAHLFIRDPIVIFNEDLQELDLTKTDHFENIQSTNWQHMRFKPPPADNSIGWRVEFRPMEIQITDFENAAFSVFIVLITRAILSFDLNFYIPIVKVDENMETAHARNANLEKKFWFRKNPFPVRTTRRGGSASRSASGTSTPNSGSSRPATPPLGPVEDEYRLMSVNEVINGTAYAKATSKEVTEDAEEGEEFPGLIPLVESYLDSVNMDVATRCGLARYLDLIRKRASGELWTAAKWIREFIAKHPGYKKDSVVSEEITKDLVGAVIEIGEREKRGLGIDDLIGQVPDLEKLFGGFLKGKSPCGGGQAALEQKLKDDDAKVNGVKRKFNEEQ.

Residues 517-552 (PVRTTRRGGSASRSASGTSTPNSGSSRPATPPLGPV) are disordered. Low complexity predominate over residues 523 to 536 (RGGSASRSASGTST).

It belongs to the glutamate--cysteine ligase type 3 family.

The catalysed reaction is L-cysteine + L-glutamate + ATP = gamma-L-glutamyl-L-cysteine + ADP + phosphate + H(+). It functions in the pathway sulfur metabolism; glutathione biosynthesis; glutathione from L-cysteine and L-glutamate: step 1/2. This is Glutamate--cysteine ligase (gcs-1) from Neurospora crassa (strain ATCC 24698 / 74-OR23-1A / CBS 708.71 / DSM 1257 / FGSC 987).